The primary structure comprises 203 residues: Holliday junction branch migration complex subunit RuvA (203 aa).

The segment at Met-1–Asn-64 is domain I. The segment at Asn-65 to Pro-142 is domain II. The flexible linker stretch occupies residues Ala-143–Pro-154. The tract at residues Ala-155–Leu-203 is domain III.

The protein belongs to the RuvA family. Homotetramer. Forms an RuvA(8)-RuvB(12)-Holliday junction (HJ) complex. HJ DNA is sandwiched between 2 RuvA tetramers; dsDNA enters through RuvA and exits via RuvB. An RuvB hexamer assembles on each DNA strand where it exits the tetramer. Each RuvB hexamer is contacted by two RuvA subunits (via domain III) on 2 adjacent RuvB subunits; this complex drives branch migration. In the full resolvosome a probable DNA-RuvA(4)-RuvB(12)-RuvC(2) complex forms which resolves the HJ.

It localises to the cytoplasm. In terms of biological role, the RuvA-RuvB-RuvC complex processes Holliday junction (HJ) DNA during genetic recombination and DNA repair, while the RuvA-RuvB complex plays an important role in the rescue of blocked DNA replication forks via replication fork reversal (RFR). RuvA specifically binds to HJ cruciform DNA, conferring on it an open structure. The RuvB hexamer acts as an ATP-dependent pump, pulling dsDNA into and through the RuvAB complex. HJ branch migration allows RuvC to scan DNA until it finds its consensus sequence, where it cleaves and resolves the cruciform DNA. The protein is Holliday junction branch migration complex subunit RuvA of Escherichia fergusonii (strain ATCC 35469 / DSM 13698 / CCUG 18766 / IAM 14443 / JCM 21226 / LMG 7866 / NBRC 102419 / NCTC 12128 / CDC 0568-73).